A 307-amino-acid polypeptide reads, in one-letter code: Elongation factor Ts (307 aa).

The tract at residues 80–83 (TDFV) is involved in Mg(2+) ion dislocation from EF-Tu.

Belongs to the EF-Ts family.

It localises to the cytoplasm. In terms of biological role, associates with the EF-Tu.GDP complex and induces the exchange of GDP to GTP. It remains bound to the aminoacyl-tRNA.EF-Tu.GTP complex up to the GTP hydrolysis stage on the ribosome. This is Elongation factor Ts from Variovorax paradoxus (strain S110).